The following is a 297-amino-acid chain: tRNA pseudouridine synthase B (297 aa).

The active-site Nucleophile is Asp41.

This sequence belongs to the pseudouridine synthase TruB family. Type 1 subfamily.

The enzyme catalyses uridine(55) in tRNA = pseudouridine(55) in tRNA. In terms of biological role, responsible for synthesis of pseudouridine from uracil-55 in the psi GC loop of transfer RNAs. This chain is tRNA pseudouridine synthase B, found in Synechococcus sp. (strain CC9311).